We begin with the raw amino-acid sequence, 155 residues long: Cyanate hydratase (155 aa).

Active-site residues include R95, E98, and S121.

This sequence belongs to the cyanase family.

The catalysed reaction is cyanate + hydrogencarbonate + 3 H(+) = NH4(+) + 2 CO2. Its function is as follows. Catalyzes the reaction of cyanate with bicarbonate to produce ammonia and carbon dioxide. In Pseudomonas savastanoi pv. phaseolicola (strain 1448A / Race 6) (Pseudomonas syringae pv. phaseolicola (strain 1448A / Race 6)), this protein is Cyanate hydratase.